The primary structure comprises 219 residues: Small ribosomal subunit protein uS3 (219 aa).

The 69-residue stretch at 38–106 (IRKYINTKLA…KVHINIVEIK (69 aa)) folds into the KH type-2 domain.

This sequence belongs to the universal ribosomal protein uS3 family. As to quaternary structure, part of the 30S ribosomal subunit. Forms a tight complex with proteins S10 and S14.

Binds the lower part of the 30S subunit head. Binds mRNA in the 70S ribosome, positioning it for translation. In Latilactobacillus sakei subsp. sakei (strain 23K) (Lactobacillus sakei subsp. sakei), this protein is Small ribosomal subunit protein uS3.